Consider the following 170-residue polypeptide: Acetolactate synthase small subunit (170 aa).

The ACT domain maps to 9–83 (TLSVLVEDKP…NVIKIVEQEE (75 aa)). Lysine 46 participates in a covalent cross-link: Isoglutamyl lysine isopeptide (Lys-Gln) (interchain with Q-Cter in protein Pup).

It belongs to the acetolactate synthase small subunit family. Dimer of large and small chains.

The catalysed reaction is 2 pyruvate + H(+) = (2S)-2-acetolactate + CO2. Its pathway is amino-acid biosynthesis; L-isoleucine biosynthesis; L-isoleucine from 2-oxobutanoate: step 1/4. It participates in amino-acid biosynthesis; L-valine biosynthesis; L-valine from pyruvate: step 1/4. This Mycolicibacterium smegmatis (strain ATCC 700084 / mc(2)155) (Mycobacterium smegmatis) protein is Acetolactate synthase small subunit (ilvH).